A 78-amino-acid polypeptide reads, in one-letter code: Polcalcin Phl p 7 (78 aa).

EF-hand domains are found at residues 1–35 (MADD…LGST) and 35–70 (TSAD…NPGL). Asp-13, Asn-15, Asp-17, Lys-19, Glu-24, Asp-48, Asp-50, Asp-52, and Glu-59 together coordinate Ca(2+).

As to quaternary structure, monomer. Specifically expressed in pollen.

Functionally, may be involved in the regulation of pollen-tube growth. In Phleum pratense (Common timothy), this protein is Polcalcin Phl p 7.